The sequence spans 453 residues: MSVVTVQLGQCGNQIGFEVFDALYSDSHCPQGLCSERENEAYQASSKERFFSEEENGVSIARAVLVDMEPKVINQTLSKAAQSGQWKYAQHSCFCQKEGSGNNWAYGYSVHGPRHEESIMNLIQKEVEKCDSLSGFFIIMSMAGGTGSGLGAFVTQNLQDQYSNSLKMNQIIWPYGTGEVIVQNYNSVLTLSHLYRSSDALLVHENDAIHKICAKLMNIKQISFSDINQVLAHQLGSVFQPTYSVEGSCHYRRNPLGDLMENLVPHPEFKMLGIRNIPQMSENSLTYSTFTWAGLLKHLRQMLISNSKMEEGINWQVRPPLPGLPTLGKVSLNRELHFNTSIANLVILRGKDVHSADLGGFKDPALYTSWLEPIDAFNVWKTQRAFSKYEKSAALVSNSQFLLKPLDTIVGKAWNMFASKAYIHQYTKFGIEEEDFLDSFTLLEQVVASYCNL.

143 to 149 is a GTP binding site; sequence AGGTGSG.

It belongs to the tubulin family. Found in a complex with TEDC1, TEDC2, TUBE1 and TUBD1.

The protein localises to the nucleus. Its subcellular location is the cytoplasm. The protein resides in the cytoskeleton. It localises to the microtubule organizing center. It is found in the centrosome. The protein localises to the centriole. Its subcellular location is the cell projection. The protein resides in the cilium. In terms of biological role, acts as a positive regulator of hedgehog signaling and regulates ciliary function. The sequence is that of Tubulin delta chain (TUBD1) from Canis lupus familiaris (Dog).